The primary structure comprises 297 residues: 4-hydroxy-tetrahydrodipicolinate synthase (297 aa).

Threonine 49 serves as a coordination point for pyruvate. Tyrosine 137 functions as the Proton donor/acceptor in the catalytic mechanism. Lysine 166 (schiff-base intermediate with substrate) is an active-site residue. Position 208 (isoleucine 208) interacts with pyruvate.

It belongs to the DapA family. Homotetramer; dimer of dimers.

The protein resides in the cytoplasm. It catalyses the reaction L-aspartate 4-semialdehyde + pyruvate = (2S,4S)-4-hydroxy-2,3,4,5-tetrahydrodipicolinate + H2O + H(+). The protein operates within amino-acid biosynthesis; L-lysine biosynthesis via DAP pathway; (S)-tetrahydrodipicolinate from L-aspartate: step 3/4. Catalyzes the condensation of (S)-aspartate-beta-semialdehyde [(S)-ASA] and pyruvate to 4-hydroxy-tetrahydrodipicolinate (HTPA). The sequence is that of 4-hydroxy-tetrahydrodipicolinate synthase from Chlorobium phaeobacteroides (strain BS1).